The following is a 558-amino-acid chain: Atlastin-1 (558 aa).

The disordered stretch occupies residues 1–28; it reads MAKNRRDRNSWGGFSEKTYEWSSEEEEP. Residues 1–34 are N-terminal hypervariable region (HVR); it reads MAKNRRDRNSWGGFSEKTYEWSSEEEEPVKKAGP. The Cytoplasmic portion of the chain corresponds to 1 to 449; it reads MAKNRRDRNS…NIFHAARTPA (449 aa). Phosphoserine occurs at positions 10, 22, and 23. Residues 64 to 309 enclose the GB1/RHD3-type G domain; it reads DKEVVAVSVA…LIPWLLSPES (246 aa). The GDP site is built by R77, K78, G79, K80, S81, F82, Q148, R217, D218, V276, and N279. Positions 77, 78, 79, 80, 81, and 82 each coordinate GTP. S81 is a Mg(2+) binding site. The GTP site is built by R217, D218, and V276. The 3HB (three-helix bundle) domain stretch occupies residues 347–438; it reads MLQATAEANN…YIQYIKHNDS (92 aa). Position 395 is an N6-acetyllysine (K395). Positions 418 to 439 form a coiled coil; it reads LQQLETEIDELYIQYIKHNDSK. The tract at residues 439-447 is linker; sequence KNIFHAART. A helical transmembrane segment spans residues 450–470; the sequence is TLFVVIFITYVIAGVTGFIGL. A topological domain (lumenal) is located at residue D471. A helical transmembrane segment spans residues 472–492; it reads IIASLCNMIMGLTLITLCTWA. The Cytoplasmic portion of the chain corresponds to 493-558; sequence YIRYSGEYRE…STEQSEKKKM (66 aa). The segment at 521-558 is autoinhibitory domain; it reads NEALYKLYSAAATHRHLYHQAFPAPKSESTEQSEKKKM.

This sequence belongs to the TRAFAC class dynamin-like GTPase superfamily. GB1/RHD3 GTPase family. GB1 subfamily. In terms of assembly, monomeric and homodimeric. The homodimer, transiently formed by two molecules on opposing membranes, is the active form mediating ER membrane fusion. Interacts with REEP1, REEP5, RTN3 and RTN4 (via the transmembrane region); these proteins are involved in endoplasmic reticulum tubular network organization. Interacts with ZFYVE27; both proteins are involved in endoplasmic reticulum tubular network organization. Interacts with ARL6IP1; both proteins are involved in endoplasmic reticulum tubular network organization. Interacts with SPAST; the interaction is direct, could recruit SPAST to Golgi membranes. Interacts (via N-terminal region) with MAP4K4 (via CNH regulatory domain). May interact with TMED2. Interacts with CPT1C. Phosphorylated. Phosphorylation, by different kinases, of the N-terminal hypervariable region (HVR) regulates the ATL1-mediated membrane tethering step.

It localises to the endoplasmic reticulum membrane. The protein localises to the golgi apparatus membrane. The protein resides in the cell projection. It is found in the axon. It catalyses the reaction GTP + H2O = GDP + phosphate + H(+). Functionally, atlastin-1 (ATL1) is a membrane-anchored GTPase that mediates the GTP-dependent fusion of endoplasmic reticulum (ER) membranes, maintaining the continuous ER network. It facilitates the formation of three-way junctions where ER tubules intersect. Two atlastin-1 on neighboring ER tubules bind GTP and form loose homodimers through the GB1/RHD3-type G domains and 3HB regions. Upon GTP hydrolysis, the 3HB regions tighten, pulling the membranes together to drive their fusion. After fusion, the homodimer disassembles upon release of inorganic phosphate (Pi). Subsequently, GDP dissociates, resetting the monomers to a conformation ready for a new fusion cycle. May also regulate more or less directly Golgi biogenesis. Indirectly regulates axonal development. This chain is Atlastin-1, found in Bos taurus (Bovine).